The primary structure comprises 475 residues: ATP synthase subunit beta, chloroplastic (475 aa).

156–163 provides a ligand contact to ATP; sequence GGAGVGKT.

It belongs to the ATPase alpha/beta chains family. As to quaternary structure, F-type ATPases have 2 components, CF(1) - the catalytic core - and CF(0) - the membrane proton channel. CF(1) has five subunits: alpha(3), beta(3), gamma(1), delta(1), epsilon(1). CF(0) has four main subunits: a(1), b(1), b'(1) and c(9-12).

Its subcellular location is the plastid. The protein localises to the chloroplast thylakoid membrane. The enzyme catalyses ATP + H2O + 4 H(+)(in) = ADP + phosphate + 5 H(+)(out). Functionally, produces ATP from ADP in the presence of a proton gradient across the membrane. The catalytic sites are hosted primarily by the beta subunits. The protein is ATP synthase subunit beta, chloroplastic of Phaeodactylum tricornutum (strain CCAP 1055/1).